Consider the following 135-residue polypeptide: Glutaredoxin-C4 (135 aa).

Positions 32–132 constitute a Glutaredoxin domain; the sequence is ADFVKKTISS…KLLGVSGNKE (101 aa). A disulfide bridge links Cys52 with Cys55.

This sequence belongs to the glutaredoxin family. CPYC subfamily.

It is found in the cytoplasm. In terms of biological role, has a glutathione-disulfide oxidoreductase activity in the presence of NADPH and glutathione reductase. Reduces low molecular weight disulfides and proteins. This is Glutaredoxin-C4 (GRXC4) from Arabidopsis thaliana (Mouse-ear cress).